We begin with the raw amino-acid sequence, 1077 residues long: Receptor-type guanylate cyclase daf-11 (1077 aa).

N14, N112, N149, and N311 each carry an N-linked (GlcNAc...) asparagine glycan. The chain crosses the membrane as a helical span at residues 335–355 (TGVIIAIAVIMGVLLMFIIIL). The 341-residue stretch at 355–695 (LTTIRKCCNG…LARKIIDTVL (341 aa)) folds into the Protein kinase domain. Residues 356–1077 (TTIRKCCNGS…DSQASTIPDN (722 aa)) lie on the Cytoplasmic side of the membrane. The 131-residue stretch at 765-895 (TILYSDIVGF…EAVILASKME (131 aa)) folds into the Guanylate cyclase domain. Residues D770, I771, and D814 each coordinate Mg(2+). Residues 983–1034 (KDKMTLAKEKVIAERKNEEERLQRQQTLQEALEEHEEEIEMNEVLVDEDEGE) adopt a coiled-coil conformation. The disordered stretch occupies residues 1048 to 1077 (TQMEELEDEPAGRTIGHGRLDSQASTIPDN).

The protein belongs to the adenylyl cyclase class-4/guanylyl cyclase family. As to expression, expressed in sensory neurons including ASI, ASJ, ASK, AWB and AWC. Expressed in ASJ neurons in the dauer stage.

Its subcellular location is the cell membrane. It is found in the cell projection. The protein localises to the dendrite. The protein resides in the cilium. It localises to the perikaryon. The enzyme catalyses GTP = 3',5'-cyclic GMP + diphosphate. Guanylate cyclase involved in the production of the second messenger cGMP. In addition, regulates cGMP levels by controlling the transcription of 3',5'-cyclic phosphodiesterase pde-1 and pde-5 mRNAs. Involved in the olfactory, light and pheromone sensing pathways. Part of the chemosensory mechanism of the ASJ sensory neuron that controls dauer formation and dauer recovery. Promotes the calcium flux in ASJ sensory neurons in response to onset and removal of a nitric oxide (NO) stimulus and is thereby required for the behavioral avoidance response to NO-producing organisms like P.aeruginosa. In ASI and ASJ sensory neurons, controls dauer formation and behavioral response to P.aeruginosa by up-regulating the transcription of daf-7, a member of the TGF-beta family. Required for the chemotaxis responses to non-volatile and volatile attractants mediated by the sensory neurons ASE and AWC respectively. Required in ASJ neurons for phototransduction downstream of G protein coupled-photoreceptor lite-1. Plays a role in the development of ASJ sensory neuron axons during late larval stages and in the maintenance of normal axon morphology in adults. Required to maintain the expression of putative olfactory receptor str-2 in one of the two AWC neurons in adults. Regulates, via the production of cGMP, lifespan (in some environmental conditions), sensitivity to oxidative stress and entry into quiescence triggered by satiety. In AWB and AWC sensory neurons, mediates the recognition of food odors which subsequently allows for the detection of preferred food sources. This chain is Receptor-type guanylate cyclase daf-11, found in Caenorhabditis elegans.